The sequence spans 357 residues: DnaJ homolog subfamily C member 25 (357 aa).

A helical membrane pass occupies residues 19-39; the sequence is WLLLAPLLLVPLLVRPAEALV. Residues 48-121 form the J domain; it reads DCYEVLGVSR…ETRKDYDYML (74 aa). Helical transmembrane passes span 147–167 and 241–261; these read VVIL…WWNS and LLLF…AWYC.

The protein belongs to the DNAJC25 family.

The protein resides in the membrane. The sequence is that of DnaJ homolog subfamily C member 25 (Dnajc25) from Rattus norvegicus (Rat).